A 211-amino-acid polypeptide reads, in one-letter code: Protein-L-isoaspartate O-methyltransferase (211 aa).

S62 is an active-site residue.

This sequence belongs to the methyltransferase superfamily. L-isoaspartyl/D-aspartyl protein methyltransferase family.

The protein localises to the cytoplasm. The catalysed reaction is [protein]-L-isoaspartate + S-adenosyl-L-methionine = [protein]-L-isoaspartate alpha-methyl ester + S-adenosyl-L-homocysteine. In terms of biological role, catalyzes the methyl esterification of L-isoaspartyl residues in peptides and proteins that result from spontaneous decomposition of normal L-aspartyl and L-asparaginyl residues. It plays a role in the repair and/or degradation of damaged proteins. The chain is Protein-L-isoaspartate O-methyltransferase from Shewanella halifaxensis (strain HAW-EB4).